The primary structure comprises 876 residues: Alanine--tRNA ligase (876 aa).

The Zn(2+) site is built by His-560, His-564, Cys-662, and His-666.

This sequence belongs to the class-II aminoacyl-tRNA synthetase family. The cofactor is Zn(2+).

The protein localises to the cytoplasm. The catalysed reaction is tRNA(Ala) + L-alanine + ATP = L-alanyl-tRNA(Ala) + AMP + diphosphate. Catalyzes the attachment of alanine to tRNA(Ala) in a two-step reaction: alanine is first activated by ATP to form Ala-AMP and then transferred to the acceptor end of tRNA(Ala). Also edits incorrectly charged Ser-tRNA(Ala) and Gly-tRNA(Ala) via its editing domain. This chain is Alanine--tRNA ligase, found in Synechococcus elongatus (strain ATCC 33912 / PCC 7942 / FACHB-805) (Anacystis nidulans R2).